The sequence spans 273 residues: Formamidopyrimidine-DNA glycosylase (273 aa).

The Schiff-base intermediate with DNA role is filled by P2. E3 serves as the catalytic Proton donor. K59 acts as the Proton donor; for beta-elimination activity in catalysis. DNA contacts are provided by H92 and R111. The FPG-type zinc finger occupies 239–273 (KVYGKTDEPCVVCGTPIEKIKLNGRGTHFCPNCQK). Catalysis depends on R263, which acts as the Proton donor; for delta-elimination activity.

Belongs to the FPG family. Monomer. Requires Zn(2+) as cofactor.

It carries out the reaction Hydrolysis of DNA containing ring-opened 7-methylguanine residues, releasing 2,6-diamino-4-hydroxy-5-(N-methyl)formamidopyrimidine.. It catalyses the reaction 2'-deoxyribonucleotide-(2'-deoxyribose 5'-phosphate)-2'-deoxyribonucleotide-DNA = a 3'-end 2'-deoxyribonucleotide-(2,3-dehydro-2,3-deoxyribose 5'-phosphate)-DNA + a 5'-end 5'-phospho-2'-deoxyribonucleoside-DNA + H(+). Involved in base excision repair of DNA damaged by oxidation or by mutagenic agents. Acts as a DNA glycosylase that recognizes and removes damaged bases. Has a preference for oxidized purines, such as 7,8-dihydro-8-oxoguanine (8-oxoG). Has AP (apurinic/apyrimidinic) lyase activity and introduces nicks in the DNA strand. Cleaves the DNA backbone by beta-delta elimination to generate a single-strand break at the site of the removed base with both 3'- and 5'-phosphates. In Listeria monocytogenes serovar 1/2a (strain ATCC BAA-679 / EGD-e), this protein is Formamidopyrimidine-DNA glycosylase.